The following is a 281-amino-acid chain: Merozoite surface protein 1 (281 aa).

A signal peptide spans 1-19 (MKIIFFLCSFLFFIINTQC). Residues 63-100 (ASAQSGASAQSGASAQSGASAQSGTSGPSGPSGTSPSS) are compositionally biased toward low complexity. The disordered stretch occupies residues 63–126 (ASAQSGASAQ…PADASDSDAK (64 aa)). Residues 101-110 (RSNTLPRSNT) show a composition bias toward polar residues. A glycan (N-linked (GlcNAc...) asparagine) is linked at Asn-109. The segment covering 111–120 (SSGASPPADA) has biased composition (low complexity). Asn-248 is a glycosylation site (N-linked (GlcNAc...) asparagine).

Forms a complex composed of subunits p83, p30, p38, and p42 which remain non-covalently associated; the complex is formed at the merozoite surface prior to egress from host erythrocytes. Forms a complex composed of processed MSP1 subunits, MSP6 subunit p36 and MSP7; the complex is formed at the merozoite surface prior to egress from host erythrocytes. Within the complex, interacts (via subunit p38) with MSP6 subunit p36 and (via subunits p83, p30 and p38) with MSP7 (via subunit p22). Forms a complex composed of MSP1, MSP6, DBLMSP1 and DBLMSP2. Within the complex, interacts (via subunit p38) with DBLMSP1 and DBLMSP2. Forms a complex composed of MSP1, and rhoptry proteins RhopH3, RAP1 and CLAG9/RhopH3. Within the complex, interacts (via subunits p42 and p19) with RhopH3 (via C-terminus). Forms a complex composed of MSP1, MSP6, MSP7, MSP9 and MSP3; within the complex, MSP6 and MSP9 mediate the binding to the host erythrocyte. Interacts (via subunits p19 and p42) with MSP9; the interaction is direct; MSP1 subunits p19 or p42, and MSP9 form a co-ligand complex that interacts with host SLC4A1/Band 3 protein. May interact with PFD6. Interacts with host spectrin. In terms of processing, the p190 precursor is cleaved by SUB1 prior to merozoite egress into 4 subunits p83, p30, p38, and p42 which remain non-covalently associated. SUB1-mediated proteolytic cleavage occurs in an orderly manner; the first cleavage occurs at the p30/p38 site, followed by cleavage at the p83/p30 site, the last cleavage occurs at the p38/p42 site. The order of cleavage is essential for parasite viability. SUB1-mediated processing is essential for merozoite egress. In a second processing step during erythrocyte invasion, p42 is cleaved by SUB2 into p33 and p19; the latter remains attached to the merozoite surface via its GPI-anchor and is endocytosed during the subsequent ring stage.

It is found in the cell membrane. It localises to the secreted. Its function is as follows. During the asexual blood stage, involved in merozoite egress from host erythrocytes possibly via its interaction with the host cytoskeleton protein spectrin resulting in the destabilization of the host cytoskeleton and thus leading to erythrocyte cell membrane rupture. Involved in the binding to host erythrocytes and is required for host erythrocyte invasion. The sequence is that of Merozoite surface protein 1 from Plasmodium falciparum (isolate NF7 / Ghana).